The following is a 215-amino-acid chain: Chaperone protein TorD (215 aa).

It belongs to the TorD/DmsD family. TorD subfamily.

The protein localises to the cytoplasm. In terms of biological role, involved in the biogenesis of TorA. Acts on TorA before the insertion of the molybdenum cofactor and, as a result, probably favors a conformation of the apoenzyme that is competent for acquiring the cofactor. This is Chaperone protein TorD from Aliivibrio fischeri (strain ATCC 700601 / ES114) (Vibrio fischeri).